Here is a 1357-residue protein sequence, read N- to C-terminus: MAYSYTEKKRIRKDFSKLPDVMDVPYLLAIQLDSYREFLQAGSIQGSLPRRRLHAAFKSVFPIISYSGNAALEYVGYRLGEPAFDVKECVLRGVTFAVPLRVKVRLIIFDKESSNKAIKDIKEQEVYMGEIPLMTENGTFVINGTERVIVSQMHRSPGVFFDHDRGKTHSSGKLLYSARIIPYRGSWLDFEFDPKDCVFVRIDRRRKLPASVLLRALGYSTEEVLNTFYTTNVFHISGEKLSLELVPQRLAGEVAVMDIHDETGKVIVEQGRRITARHINQLEKAGVKQLDVPMEYVLGRTTAKAIVHPATGEILAECNTEMTTELLIKVAKAQVVRIETLYTNDIDCGPFISDTLKIDTTSNQLEALVEIYRMMRPGEPPTKDAAETLFNNLFFSAERYDLSPLGRMKFNRRIGRTEIEGSGVLSKEDIVEVLKTLVDIRNGKGIVDDIDHLGNRRVRCVGEMAENQFRVGLVRVERAVKERLSMAESEGLMPQDLINAKPVAAAVKEFFGSSQLSQFMDQNNPLSEITHKRRCSALGPGGLTRERAGFEVRDVHPTHYGRVCPIETPEGPNIGLINSLAAYARTNQYGFLESPYRVVKEGVVSDDIVFLSAIEEADHVIAQASAAMNDKKQLIDELVAVRHLNEFTVKAPEDVTLMDVSPKQVVSVAASLIPFLEHDDANRALMGSNMQRQAVPTLRADKPLVGTGMERNVARDSGVCVVRRRGGVIDSVDASRIVVRVADDEVETGERRVDIYNLTKYTRSNQNTCINQRPLVSKGDKVQRGDIMADRASTDMGELALGQNMRIAFMAWNGFNFEDSICLSERVVQEDRFTTIHIQELTCVARDNKLGPREITSGIPNVGEAALNKLDEAGIVYVGAEVGAGDILVGKVTPKGHTQLTPEEKLLRAIFGEKASDVKDTSLRVPTGTQGTVIDVQVFTRDGVERDSRALAIEKMQLDEIPQDLNEEFRIVEGATFERLRSALNGQVVDGGAGLKKGTVITDEVLDGLDDGQWFKLRMAEDALNEQLEKAQQYIVDRRRLLDDKFEDKKRNVQQGDDLAPGVLKIVKVYLAIRRRIQPGDKMAGRHGNKGVVSVIMPVEDMPHDANGTPVDVVLNPLGVPSRMNVGQILETHLGLAAKGLGEKIDRMLEEQRKAAELRVFLTEVYNEIGGRQENLDEFTDEEILALANNLKKGVPMATPVFDGAKEREIKAMLKLADLPESGQMVLFDGRTRNKFERPVTVGYMYMLKLNHLVDDKMHARSTGSYSLVTQQPLGGKAQFGGQRFGEMEVWALEAYGAAYTLQEMLTVKSDDVNGRTKMYKNIVDGDHRMEPGMAESFNVLIKEIRSLGIDIDLETE.

It belongs to the RNA polymerase beta chain family. The RNAP catalytic core consists of 2 alpha, 1 beta, 1 beta' and 1 omega subunit. When a sigma factor is associated with the core the holoenzyme is formed, which can initiate transcription.

The catalysed reaction is RNA(n) + a ribonucleoside 5'-triphosphate = RNA(n+1) + diphosphate. Its function is as follows. DNA-dependent RNA polymerase catalyzes the transcription of DNA into RNA using the four ribonucleoside triphosphates as substrates. This is DNA-directed RNA polymerase subunit beta from Pseudomonas putida (Arthrobacter siderocapsulatus).